A 417-amino-acid chain; its full sequence is Valine--pyruvate aminotransferase (417 aa).

K249 carries the post-translational modification N6-(pyridoxal phosphate)lysine.

Belongs to the class-I pyridoxal-phosphate-dependent aminotransferase family. Homodimer. Requires pyridoxal 5'-phosphate as cofactor.

The protein resides in the cytoplasm. It carries out the reaction L-valine + pyruvate = 3-methyl-2-oxobutanoate + L-alanine. Functionally, involved in the biosynthesis of alanine. In Escherichia coli (strain K12), this protein is Valine--pyruvate aminotransferase (avtA).